We begin with the raw amino-acid sequence, 103 residues long: G0/G1 switch protein 2 (103 aa).

Directly interacts with BCL2; this interaction prevents the formation of the anti-apoptotic BAX-BCL2 complex.

Its subcellular location is the mitochondrion. Its function is as follows. Promotes apoptosis by binding to BCL2, hence preventing the formation of protective BCL2-BAX heterodimers. The sequence is that of G0/G1 switch protein 2 (G0s2) from Mus musculus (Mouse).